We begin with the raw amino-acid sequence, 458 residues long: Bone morphogenetic protein 3 (458 aa).

Residues 1–23 form the signal peptide; sequence MAECRPWLVLWVGCCGCLCLALG. Residues 24 to 348 constitute a propeptide that is removed on maturation; that stretch reads ELLNDGLLAV…EQTLKKARRK (325 aa). N107 is a glycosylation site (N-linked (GlcNAc...) asparagine). Disordered stretches follow at residues 244-275 and 303-335; these read DSVVSSLHGPHTPLALKPNRKTEKAEQRKKRS and ERKPYKNLQGRQNEKDKNKKKLRKGSRQKSQTL. The segment covering 320 to 329 has biased composition (basic residues); that stretch reads NKKKLRKGSR. 3 disulfide bridges follow: C356–C423, C385–C455, and C389–C457. N449 carries an N-linked (GlcNAc...) asparagine glycan.

The protein belongs to the TGF-beta family. In terms of assembly, homodimer. Can form heterodimers with ADMP, BMP-2-I and/or BMP-2-II, and DERRIERE.

It is found in the secreted. Its function is as follows. Dorsalizing factor. Antagonizes mesoderm formation by ventralizing BMPs. The polypeptide is Bone morphogenetic protein 3 (bmp3) (Xenopus laevis (African clawed frog)).